A 2322-amino-acid chain; its full sequence is Protein sidekick homolog (2322 aa).

Positions 1–26 (MNYRIFLLFCTTTVLWSVVSTQLVLG) are cleaved as a signal peptide. The Extracellular portion of the chain corresponds to 27–2020 (KPPIFQNTGP…IPDDPFYTTW (1994 aa)). Ig-like C2-type domains lie at 28 to 105 (PPIF…AAIS), 217 to 319 (PSLQ…AYLT), and 324 to 397 (PVLK…ADMS). Cystine bridges form between cysteine 52/cysteine 94, cysteine 247/cysteine 301, and cysteine 345/cysteine 386. Asparagine 408 carries N-linked (GlcNAc...) asparagine glycosylation. 2 consecutive Ig-like C2-type domains span residues 450 to 545 (PFTS…VQVN) and 548 to 639 (SLIE…AMLQ). Intrachain disulfides connect cysteine 481/cysteine 529 and cysteine 569/cysteine 623. Residues asparagine 633 and asparagine 656 are each glycosylated (N-linked (GlcNAc...) asparagine). Fibronectin type-III domains lie at 646-752 (MPER…MPQQ), 757-854 (APRN…TAEG), 859-958 (APKN…TEED), 962-1056 (AVDE…VPPE), 1060-1155 (RPSM…TLQT), 1160-1255 (PSQR…TYES), 1260-1360 (SPRN…TLED), 1364-1458 (PPES…SSVR), 1464-1567 (APAP…TLPS), 1572-1672 (QPIS…VGYS), 1674-1774 (PKRN…LEDK), 1777-1873 (PVGV…SKDG), and 1908-2010 (QAKR…VPES). Positions 732-762 (SNKHGPGKPSLPSSSVTMPQQPPSAAPRNVA) are disordered. N-linked (GlcNAc...) asparagine glycosylation is found at asparagine 808, asparagine 869, asparagine 933, and asparagine 1017. The span at 1040–1049 (GDGPVEETKF) shows a compositional bias: basic and acidic residues. Residues 1040–1060 (GDGPVEETKFESGVPPELPGR) form a disordered region. Asparagine 1108 is a glycosylation site (N-linked (GlcNAc...) asparagine). Positions 1139–1163 (GRGAPSEPSRTFETLQTNPETPSQR) are disordered. The segment covering 1146 to 1163 (PSRTFETLQTNPETPSQR) has biased composition (polar residues). N-linked (GlcNAc...) asparagine glycosylation is found at asparagine 1615, asparagine 1677, and asparagine 1864. The disordered stretch occupies residues 1916–1965 (EETENGYVSQRPRRNEIRGAKSAAQTSASSNSNRPTHPIGEWITLRPTDG). The span at 1935–1947 (AKSAAQTSASSNS) shows a compositional bias: low complexity. Residues 2021–2041 (WFMALVAMAAFVLIVIIIAIL) form a helical membrane-spanning segment. Residues 2042–2322 (CVTGSSAKYR…NLTAGFSSFV (281 aa)) are Cytoplasmic-facing. Disordered stretches follow at residues 2081–2114 (NMTRSRELPTRPGTTQSWLSDQSREPPAYGSVLG), 2167–2254 (YVVS…ADDI), and 2276–2322 (MVRA…SSFV). Polar residues predominate over residues 2092-2101 (PGTTQSWLSD). Over residues 2207-2223 (PSSSGGSQPQGSPQQQQ) the composition is skewed to low complexity. Acidic residues predominate over residues 2227–2238 (DSFDEEDDVDDD). Polar residues-rich tracts occupy residues 2282-2302 (LTNQQPSSAAGRSSTTDSTSE) and 2310-2322 (ATPNLTAGFSSFV).

It belongs to the sidekick family.

It localises to the membrane. Its function is as follows. Cell adhesion protein. This Caenorhabditis briggsae protein is Protein sidekick homolog (rig-4).